We begin with the raw amino-acid sequence, 380 residues long: Chaperone protein DnaJ (380 aa).

Residues 5–70 (DYYEVLGLQK…EKRAAYDQYG (66 aa)) form the J domain. The CR-type zinc finger occupies 136–214 (GCKKDIRIST…CHGDGRVQKA (79 aa)). Positions 149, 152, 166, 169, 188, 191, 202, and 205 each coordinate Zn(2+). CXXCXGXG motif repeat units follow at residues 149–156 (CDTCHGSG), 166–173 (CSHCHGSG), 188–195 (CPSCHGSG), and 202–209 (CKSCHGDG).

Belongs to the DnaJ family. As to quaternary structure, homodimer. Requires Zn(2+) as cofactor.

The protein resides in the cytoplasm. Its function is as follows. Participates actively in the response to hyperosmotic and heat shock by preventing the aggregation of stress-denatured proteins and by disaggregating proteins, also in an autonomous, DnaK-independent fashion. Unfolded proteins bind initially to DnaJ; upon interaction with the DnaJ-bound protein, DnaK hydrolyzes its bound ATP, resulting in the formation of a stable complex. GrpE releases ADP from DnaK; ATP binding to DnaK triggers the release of the substrate protein, thus completing the reaction cycle. Several rounds of ATP-dependent interactions between DnaJ, DnaK and GrpE are required for fully efficient folding. Also involved, together with DnaK and GrpE, in the DNA replication of plasmids through activation of initiation proteins. The sequence is that of Chaperone protein DnaJ from Actinobacillus pleuropneumoniae serotype 5b (strain L20).